The chain runs to 136 residues: Small ribosomal subunit protein eS17B (136 aa).

It belongs to the eukaryotic ribosomal protein eS17 family. As to quaternary structure, component of the small ribosomal subunit (SSU). Mature yeast ribosomes consist of a small (40S) and a large (60S) subunit. The 40S small subunit contains 1 molecule of ribosomal RNA (18S rRNA) and 33 different proteins (encoded by 57 genes). The large 60S subunit contains 3 rRNA molecules (25S, 5.8S and 5S rRNA) and 46 different proteins (encoded by 81 genes).

The protein resides in the cytoplasm. Its function is as follows. Component of the ribosome, a large ribonucleoprotein complex responsible for the synthesis of proteins in the cell. The small ribosomal subunit (SSU) binds messenger RNAs (mRNAs) and translates the encoded message by selecting cognate aminoacyl-transfer RNA (tRNA) molecules. The large subunit (LSU) contains the ribosomal catalytic site termed the peptidyl transferase center (PTC), which catalyzes the formation of peptide bonds, thereby polymerizing the amino acids delivered by tRNAs into a polypeptide chain. The nascent polypeptides leave the ribosome through a tunnel in the LSU and interact with protein factors that function in enzymatic processing, targeting, and the membrane insertion of nascent chains at the exit of the ribosomal tunnel. In Saccharomyces cerevisiae (strain ATCC 204508 / S288c) (Baker's yeast), this protein is Small ribosomal subunit protein eS17B.